The following is a 393-amino-acid chain: Lysine/ornithine decarboxylase (393 aa).

At Lys-51 the chain carries N6-(pyridoxal phosphate)lysine. Cys-323 (proton donor; shared with dimeric partner) is an active-site residue.

This sequence belongs to the Orn/Lys/Arg decarboxylase class-II family. In terms of assembly, homodimer. Pyridoxal 5'-phosphate serves as cofactor.

The catalysed reaction is L-lysine + H(+) = cadaverine + CO2. The enzyme catalyses L-ornithine + H(+) = putrescine + CO2. The protein operates within amine and polyamine biosynthesis; putrescine biosynthesis via L-ornithine pathway; putrescine from L-ornithine: step 1/1. Its activity is regulated as follows. Inhibited competitively by both alpha-difluoromethyllysine and alpha-difluoromethylornithine. In terms of biological role, decarboxylates both L-lysine and L-ornithine with similar catalytic efficiency. The polypeptide is Lysine/ornithine decarboxylase (ldc) (Selenomonas ruminantium).